A 605-amino-acid chain; its full sequence is Ankyrin repeat domain-containing protein 13D (605 aa).

UIM domains lie at 482-501 (EDDD…AGTE) and 528-547 (EEQL…STES). Residues 538-554 (QESLQLSTESRGPESPQ) are compositionally biased toward low complexity. The interval 538–605 (QESLQLSTES…RILQLSLTEH (68 aa)) is disordered. Serine 552 is modified (phosphoserine). Threonine 556 is subject to Phosphothreonine. The segment covering 564–575 (SFEEQLRLALEL) has biased composition (low complexity). 2 consecutive UIM domains span residues 564–583 (SFEE…QEEL) and 589–605 (QEED…LTEH). Basic and acidic residues predominate over residues 576–589 (SSREQEELERRGQQ).

In terms of assembly, interacts with EGFR (ubiquitinated); the interaction is direct and may regulate EGFR internalization.

It is found in the cell membrane. The protein resides in the late endosome. Functionally, ubiquitin-binding protein that specifically recognizes and binds 'Lys-63'-linked ubiquitin. Does not bind 'Lys-48'-linked ubiquitin. Positively regulates the internalization of ligand-activated EGFR by binding to the Ub moiety of ubiquitinated EGFR at the cell membrane. This chain is Ankyrin repeat domain-containing protein 13D (Ankrd13d), found in Mus musculus (Mouse).